Consider the following 216-residue polypeptide: Glycerol-3-phosphate acyltransferase (216 aa).

Transmembrane regions (helical) follow at residues 11 to 31 (LVLG…FGLV), 62 to 82 (LALA…LVAS), 95 to 115 (VLAG…PIWL), 132 to 152 (ATAW…AALF), and 171 to 191 (LVLA…LAWI).

Belongs to the PlsY family. Probably interacts with PlsX.

It is found in the cell inner membrane. It catalyses the reaction an acyl phosphate + sn-glycerol 3-phosphate = a 1-acyl-sn-glycero-3-phosphate + phosphate. It functions in the pathway lipid metabolism; phospholipid metabolism. Functionally, catalyzes the transfer of an acyl group from acyl-phosphate (acyl-PO(4)) to glycerol-3-phosphate (G3P) to form lysophosphatidic acid (LPA). This enzyme utilizes acyl-phosphate as fatty acyl donor, but not acyl-CoA or acyl-ACP. The polypeptide is Glycerol-3-phosphate acyltransferase (Rhodospirillum rubrum (strain ATCC 11170 / ATH 1.1.1 / DSM 467 / LMG 4362 / NCIMB 8255 / S1)).